A 2207-amino-acid chain; its full sequence is Genome polyprotein (2207 aa).

A lipid anchor (N-myristoyl glycine; by host) is attached at Gly2. At 2–1518 (GAQVSSQKVG…NINRAMTILQ (1517 aa)) the chain is on the cytoplasmic side. The tract at residues 579 to 599 (GLGDLIEGVVEGVTRNALTPL) is amphipathic alpha-helix. Polar residues predominate over residues 597 to 613 (TPLTPANNLPDTQSSGP). Disordered regions lie at residues 597 to 620 (TPLTPANNLPDTQSSGPAHSKETP) and 628 to 647 (GATNPLVPSDTVQTRHVIQK). Residues His899 and Asp917 each act as for protease 2A activity in the active site. Zn(2+) is bound by residues Cys934 and Cys936. The active-site For protease 2A activity is the Cys988. The Zn(2+) site is built by Cys994 and His996. Residues 1126 to 1198 (GDSWLKKFTE…HQSCPSQEHQ (73 aa)) are membrane-binding. Residues 1126 to 1264 (GDSWLKKFTE…SPGTGKSVAT (139 aa)) form an oligomerization region. Residues 1147–1151 (SNKIS) form an RNA-binding region. The SF3 helicase domain occupies 1230–1386 (EHTINNYVQF…SEYSRDGKLN (157 aa)). 1254-1261 (GSPGTGKS) contacts ATP. Zn(2+) contacts are provided by Cys1394, Cys1397, Cys1406, and Cys1411. The C4-type zinc-finger motif lies at 1394 to 1411 (CKNCHHPANFKRCCPLVC). The interval 1438–1445 (ERNRRSSI) is RNA-binding. The oligomerization stretch occupies residues 1449–1454 (MEALFQ). The stretch at 1519–1534 (AVTTFAAVAGVVYVMY) is an intramembrane region. Residues 1535 to 2207 (KLFAGHQGAY…TLYRRWLDSF (673 aa)) are Cytoplasmic-facing. Position 1544 is an O-(5'-phospho-RNA)-tyrosine (Tyr1544). The region spanning 1564 to 1742 (GPGFDYAVAM…FAAALKRSYF (179 aa)) is the Peptidase C3 domain. Residues His1603, Glu1634, and Cys1710 each act as for protease 3C activity in the active site. The region spanning 1973–2088 (EKLFAFDYTG…SYPHEVDASL (116 aa)) is the RdRp catalytic domain. 2 residues coordinate Mg(2+): Asp1979 and Asp2074.

This sequence belongs to the picornaviruses polyprotein family. As to quaternary structure, interacts with capsid protein VP1 and capsid protein VP3 to form heterotrimeric protomers. Interacts with capsid protein VP0, and capsid protein VP3 to form heterotrimeric protomers. Interacts with human PVR. Five protomers subsequently associate to form pentamers which serve as building blocks for the capsid. Interacts with capsid protein VP2, capsid protein VP3 and capsid protein VP4 following cleavage of capsid protein VP0. In terms of assembly, interacts with capsid protein VP1 and capsid protein VP3 in the mature capsid. As to quaternary structure, interacts with capsid protein VP0 and capsid protein VP1 to form heterotrimeric protomers. Five protomers subsequently associate to form pentamers which serve as building blocks for the capsid. Interacts with capsid protein VP4 in the mature capsid. Interacts with protein 2C; this interaction may be important for virion morphogenesis. Interacts with capsid protein VP1 and capsid protein VP3. In terms of assembly, homodimer. As to quaternary structure, homohexamer; forms a hexameric ring structure with 6-fold symmetry characteristic of AAA+ ATPases. Interacts (via N-terminus) with host RTN3 (via reticulon domain); this interaction is important for viral replication. Interacts with capsid protein VP3; this interaction may be important for virion morphogenesis. Interacts with protein 3CD. In terms of assembly, homodimer. Interacts with host GBF1. Interacts (via GOLD domain) with host ACBD3 (via GOLD domain); this interaction allows the formation of a viral protein 3A/ACBD3 heterotetramer with a 2:2 stoichiometry, which will stimulate the recruitment of host PI4KB in order to synthesize PI4P at the viral RNA replication sites. As to quaternary structure, interacts with RNA-directed RNA polymerase. Interacts with protein 3AB and with RNA-directed RNA polymerase. In terms of assembly, interacts with Viral protein genome-linked and with protein 3CD. Mg(2+) is required as a cofactor. Specific enzymatic cleavages in vivo by the viral proteases yield processing intermediates and the mature proteins. In terms of processing, myristoylation is required for the formation of pentamers during virus assembly. Further assembly of 12 pentamers and a molecule of genomic RNA generates the provirion. Post-translationally, during virion maturation, immature virions are rendered infectious following cleavage of VP0 into VP4 and VP2. This maturation seems to be an autocatalytic event triggered by the presence of RNA in the capsid and it is followed by a conformational change infectious virion. Myristoylation is required during RNA encapsidation and formation of the mature virus particle. In terms of processing, VPg is uridylylated by the polymerase into VPg-pUpU. This acts as a nucleotide-peptide primer for the genomic RNA replication.

The protein resides in the virion. It is found in the host cytoplasm. It localises to the host cytoplasmic vesicle membrane. Its subcellular location is the host nucleus. The enzyme catalyses a ribonucleoside 5'-triphosphate + H2O = a ribonucleoside 5'-diphosphate + phosphate + H(+). The catalysed reaction is Selective cleavage of Tyr-|-Gly bond in the picornavirus polyprotein.. It catalyses the reaction RNA(n) + a ribonucleoside 5'-triphosphate = RNA(n+1) + diphosphate. It carries out the reaction Selective cleavage of Gln-|-Gly bond in the poliovirus polyprotein. In other picornavirus reactions Glu may be substituted for Gln, and Ser or Thr for Gly.. With respect to regulation, replication or transcription is subject to high level of random mutations by the nucleotide analog ribavirin. Its function is as follows. Forms an icosahedral capsid of pseudo T=3 symmetry with capsid proteins VP2 and VP3. The capsid is 300 Angstroms in diameter, composed of 60 copies of each capsid protein and enclosing the viral positive strand RNA genome. Capsid protein VP1 mainly forms the vertices of the capsid. Capsid protein VP1 interacts with host cell receptor PVR to provide virion attachment to target host cells. This attachment induces virion internalization predominantly through clathrin- and caveolin-independent endocytosis in Hela cells and through caveolin-mediated endocytosis in brain microvascular endothelial cells. Tyrosine kinases are probably involved in the entry process. Virus binding to PVR induces increased junctional permeability and rearrangement of junctional proteins. Modulation of endothelial tight junctions, as well as cytolytic infection of endothelial cells themselves, may result in loss of endothelial integrity which may help the virus to reach the CNS. After binding to its receptor, the capsid undergoes conformational changes. Capsid protein VP1 N-terminus (that contains an amphipathic alpha-helix) and capsid protein VP4 are externalized. Together, they shape a pore in the host membrane through which viral genome is translocated to host cell cytoplasm. Functionally, forms an icosahedral capsid of pseudo T=3 symmetry with capsid proteins VP2 and VP3. The capsid is 300 Angstroms in diameter, composed of 60 copies of each capsid protein and enclosing the viral positive strand RNA genome. In terms of biological role, lies on the inner surface of the capsid shell. After binding to the host receptor, the capsid undergoes conformational changes. Capsid protein VP4 is released, Capsid protein VP1 N-terminus is externalized, and together, they shape a pore in the host membrane through which the viral genome is translocated into the host cell cytoplasm. Component of immature procapsids, which is cleaved into capsid proteins VP4 and VP2 after maturation. Allows the capsid to remain inactive before the maturation step. Its function is as follows. Cysteine protease that cleaves viral polyprotein and specific host proteins. It is responsible for the autocatalytic cleavage between the P1 and P2 regions, which is the first cleavage occurring in the polyprotein. Also cleaves the host translation initiation factor EIF4G1, in order to shut down the capped cellular mRNA translation. Inhibits the host nucleus-cytoplasm protein and RNA trafficking by cleaving host members of the nuclear pores including NUP98, NUP62 and NUP153. Counteracts stress granule formation probably by antagonizing its assembly or promoting its dissassembly. Cleaves and inhibits host IFIH1/MDA5, thereby inhibiting the type-I IFN production and the establishment of the antiviral state. Cleaves and inhibits host MAVS, thereby inhibiting the type-I IFN production and the establishment of the antiviral state. Functionally, plays an essential role in the virus replication cycle by acting as a viroporin. Creates a pore in the host endoplasmic reticulum and as a consequence releases Ca2+ in the cytoplasm of infected cell. In turn, high levels of cytoplasmic calcium may trigger membrane trafficking and transport of viral ER-associated proteins to viroplasms, sites of viral genome replication. In terms of biological role, induces and associates with structural rearrangements of intracellular membranes. Displays RNA-binding, nucleotide binding and NTPase activities. May play a role in virion morphogenesis and viral RNA encapsidation by interacting with the capsid protein VP3. Localizes the viral replication complex to the surface of membranous vesicles. Together with protein 3CD binds the Cis-Active RNA Element (CRE) which is involved in RNA synthesis initiation. Acts as a cofactor to stimulate the activity of 3D polymerase, maybe through a nucleid acid chaperone activity. Its function is as follows. Localizes the viral replication complex to the surface of membranous vesicles. It inhibits host cell endoplasmic reticulum-to-Golgi apparatus transport and causes the disassembly of the Golgi complex, possibly through GBF1 interaction. This would result in depletion of MHC, trail receptors and IFN receptors at the host cell surface. Plays an essential role in viral RNA replication by recruiting ACBD3 and PI4KB at the viral replication sites, thereby allowing the formation of the rearranged membranous structures where viral replication takes place. Functionally, acts as a primer for viral RNA replication and remains covalently bound to viral genomic RNA. VPg is uridylylated prior to priming replication into VPg-pUpU. The oriI viral genomic sequence may act as a template for this. The VPg-pUpU is then used as primer on the genomic RNA poly(A) by the RNA-dependent RNA polymerase to replicate the viral genome. During genome replication, the VPg-RNA linkage is removed by the host TDP2, thereby accelerating replication. During the late stage of the replication cycle, host TDP2 is excluded from sites of viral RNA synthesis and encapsidation, allowing for the generation of progeny virions. In terms of biological role, involved in the viral replication complex and viral polypeptide maturation. It exhibits protease activity with a specificity and catalytic efficiency that is different from protease 3C. Protein 3CD lacks polymerase activity. Protein 3CD binds to the 5'UTR of the viral genome. Major viral protease that mediates proteolytic processing of the polyprotein. Cleaves host EIF5B, contributing to host translation shutoff. Also cleaves host PABPC1, contributing to host translation shutoff. Cleaves host RIGI and thus contributes to the inhibition of type I interferon production. Cleaves host NLRP1, triggers host N-glycine-mediated degradation of the autoinhibitory NLRP1 N-terminal fragment. Inhibits the integrated stress response (ISR) in the infected cell by cleaving host G3BP1. Stress granule formation is thus inhibited, which allows protein synthesis and viral replication. Its function is as follows. Replicates the viral genomic RNA on the surface of intracellular membranes. May form linear arrays of subunits that propagate along a strong head-to-tail interaction called interface-I. Covalently attaches UMP to a tyrosine of VPg, which is used to prime RNA synthesis. The positive stranded RNA genome is first replicated at virus induced membranous vesicles, creating a dsRNA genomic replication form. This dsRNA is then used as template to synthesize positive stranded RNA genomes. ss(+)RNA genomes are either translated, replicated or encapsidated. This chain is Genome polyprotein, found in Homo sapiens (Human).